A 204-amino-acid chain; its full sequence is Ancillary SecYEG translocon subunit (204 aa).

At 1-23 the chain is on the cytoplasmic side; sequence MAYTIEEEQELTAIKAWWNENYK. The helical transmembrane segment at 24–44 threads the bilayer; it reads FIIVCFVIAFGGVFGWNYWQS. The Periplasmic segment spans residues 45–204; the sequence is HQIQKMHKAS…QLIQVRLNNL (160 aa).

This sequence belongs to the YfgM family. Interacts with the SecYEG translocon. Forms a complex with PpiD.

The protein resides in the cell inner membrane. May mediate protein transfer from the SecYEG translocon to the periplasmic chaperone network via its periplasmic C-terminal region. The chain is Ancillary SecYEG translocon subunit (1057) from Aggregatibacter actinomycetemcomitans (Actinobacillus actinomycetemcomitans).